A 299-amino-acid chain; its full sequence is ATP phosphoribosyltransferase (299 aa).

This sequence belongs to the ATP phosphoribosyltransferase family. Long subfamily. Mg(2+) serves as cofactor.

It is found in the cytoplasm. It carries out the reaction 1-(5-phospho-beta-D-ribosyl)-ATP + diphosphate = 5-phospho-alpha-D-ribose 1-diphosphate + ATP. Its pathway is amino-acid biosynthesis; L-histidine biosynthesis; L-histidine from 5-phospho-alpha-D-ribose 1-diphosphate: step 1/9. With respect to regulation, feedback inhibited by histidine. Its function is as follows. Catalyzes the condensation of ATP and 5-phosphoribose 1-diphosphate to form N'-(5'-phosphoribosyl)-ATP (PR-ATP). Has a crucial role in the pathway because the rate of histidine biosynthesis seems to be controlled primarily by regulation of HisG enzymatic activity. The protein is ATP phosphoribosyltransferase of Mannheimia succiniciproducens (strain KCTC 0769BP / MBEL55E).